Reading from the N-terminus, the 183-residue chain is Cell division protein SepF (183 aa).

The tract at residues 149–183 (SSEESAAPSVMAREEEATAPAAPSPAWGTQDAING) is disordered.

This sequence belongs to the SepF family. As to quaternary structure, homodimer. Interacts with FtsZ.

The protein localises to the cytoplasm. Its function is as follows. Cell division protein that is part of the divisome complex and is recruited early to the Z-ring. Probably stimulates Z-ring formation, perhaps through the cross-linking of FtsZ protofilaments. Its function overlaps with FtsA. The protein is Cell division protein SepF of Synechococcus sp. (strain RCC307).